The following is a 906-amino-acid chain: Peroxisomal hydratase-dehydrogenase-epimerase (906 aa).

Short-chain dehydrogenase like stretches follow at residues 5–228 (DFKD…SSAE) and 319–532 (SLKD…GTDD). Positions 13, 52, 98, and 131 each coordinate NADP(+). Catalysis depends on proton donor residues S149 and Y163. The NADP(+) site is built by Y163 and K167. The Proton acceptor role is filled by Y163. The active-site Lowers pKa of active site Tyr is the K167. Y467 serves as the catalytic Proton acceptor. Residues 600-633 (AVGGDDDDDDEDEEEDEGDEEEDEEDEEEDDPVW) are disordered. Positions 603 to 630 (GDDDDDDEDEEEDEGDEEEDEEDEEEDD) are enriched in acidic residues. Positions 699, 700, 729, 757, 808, 810, 831, 856, 857, and 858 each coordinate (3R)-3-hydroxydecanoyl-CoA. The MaoC-like domain occupies 782-893 (APKRAPDYQV…VVDRGTIAIN (112 aa)). Positions 904–906 (AKI) match the Microbody targeting signal motif.

It belongs to the short-chain dehydrogenases/reductases (SDR) family. In terms of assembly, monomer.

It localises to the peroxisome. It catalyses the reaction a (3R)-3-hydroxyacyl-CoA = a (2E)-enoyl-CoA + H2O. The catalysed reaction is a (3R)-3-hydroxyacyl-CoA + NAD(+) = a 3-oxoacyl-CoA + NADH + H(+). Its pathway is lipid metabolism; fatty acid beta-oxidation. Functionally, second trifunctional enzyme acting on the beta-oxidation pathway for fatty acids, possessing hydratase-dehydrogenase-epimerase activities. Converts trans-2-enoyl-CoA via D-3-hydroxyacyl-CoA to 3-ketoacyl-CoA. The polypeptide is Peroxisomal hydratase-dehydrogenase-epimerase (Candida tropicalis (Yeast)).